A 456-amino-acid chain; its full sequence is Rap guanine nucleotide exchange factor-like 1 (456 aa).

Residues 218–454 (EPEDVANHLT…FELSYKLEAN (237 aa)) form the Ras-GEF domain.

In terms of biological role, probable guanine nucleotide exchange factor (GEF). The protein is Rap guanine nucleotide exchange factor-like 1 (RAPGEFL1) of Pongo pygmaeus (Bornean orangutan).